The primary structure comprises 793 residues: Sucrose synthase (793 aa).

Residues 259–738 (MILNIAIISP…AIKRVTEKYS (480 aa)) form a GT-B glycosyltransferase region.

This sequence belongs to the glycosyltransferase 1 family. Homotetramer.

The catalysed reaction is an NDP-alpha-D-glucose + D-fructose = a ribonucleoside 5'-diphosphate + sucrose + H(+). Catalyzes the reversible conversion of sucrose and a nucleotide disphosphate (NDP) into fructose and NDP-glucose; although the reaction is freely reversible in vitro, the physiological reaction seems to be sucrose cleavage. Unlike characterized plant enzymes prefers ADP as a cosubstrate, whereas plants prefer UDP. Its preference for ADP over UDP suggests it may directly link sucrose and glycogen metabolism. This chain is Sucrose synthase, found in Melioribacter roseus (strain JCM 17771 / P3M-2).